Consider the following 81-residue polypeptide: Insulin (81 aa).

Cystine bridges form between cysteine 7–cysteine 67, cysteine 19–cysteine 80, and cysteine 66–cysteine 71. Residues 33 to 58 (DVEQPLVNGPLHGEVGELPFQHEEYQ) constitute a propeptide, c peptide.

It belongs to the insulin family. Heterodimer of a B chain and an A chain linked by two disulfide bonds.

It localises to the secreted. In terms of biological role, insulin decreases blood glucose concentration. It increases cell permeability to monosaccharides, amino acids and fatty acids. It accelerates glycolysis, the pentose phosphate cycle, and glycogen synthesis in liver. In Anas platyrhynchos (Mallard), this protein is Insulin (INS).